A 189-amino-acid chain; its full sequence is Pyridoxal 5'-phosphate synthase subunit PdxT (189 aa).

Residue 47 to 49 (GES) coordinates L-glutamine. Cys-79 acts as the Nucleophile in catalysis. L-glutamine-binding positions include Arg-106 and 135–136 (IR). Catalysis depends on charge relay system residues His-171 and Glu-173.

It belongs to the glutaminase PdxT/SNO family. In the presence of PdxS, forms a dodecamer of heterodimers. Only shows activity in the heterodimer.

The enzyme catalyses aldehydo-D-ribose 5-phosphate + D-glyceraldehyde 3-phosphate + L-glutamine = pyridoxal 5'-phosphate + L-glutamate + phosphate + 3 H2O + H(+). The catalysed reaction is L-glutamine + H2O = L-glutamate + NH4(+). The protein operates within cofactor biosynthesis; pyridoxal 5'-phosphate biosynthesis. Functionally, catalyzes the hydrolysis of glutamine to glutamate and ammonia as part of the biosynthesis of pyridoxal 5'-phosphate. The resulting ammonia molecule is channeled to the active site of PdxS. This Thermoanaerobacter pseudethanolicus (strain ATCC 33223 / 39E) (Clostridium thermohydrosulfuricum) protein is Pyridoxal 5'-phosphate synthase subunit PdxT.